The sequence spans 92 residues: LYR motif-containing protein 4 homolog (92 aa).

Positions 40 to 68 (ANKAIRDFAEIDRQMEAGKQNLELIRRQV) form a coiled coil.

This sequence belongs to the complex I LYR family. Component of the mitochondrial core iron-sulfur cluster (ISC) assembly complex at least composed of the cysteine desulfurase Nfs1, the scaffold protein IscU, the accessory protein bcn92/Isd11/Lyrm4, and probably fh/frataxin. Interacts with Nfs1.

The protein resides in the mitochondrion. In terms of biological role, stabilizing factor of the core iron-sulfur cluster (ISC) assembly complex that regulates the stability and cysteine desulfurase activity of Nfs1 and participates in the [2Fe-2S] clusters assembly on the scaffolding protein IscU. The protein is LYR motif-containing protein 4 homolog of Drosophila subobscura (Fruit fly).